A 1091-amino-acid chain; its full sequence is Protein diaphanous (1091 aa).

The disordered stretch occupies residues 1–37 (MSRHEKTKSTGGGLLDSLFGRPSKSKGGTISSGTLAH). The interval 1-56 (MSRHEKTKSTGGGLLDSLFGRPSKSKGGTISSGTLAHGGRPVSADNYVVPGVEDFE) is basic region. Low complexity predominate over residues 25–34 (SKGGTISSGT). One can recognise a GBD/FH3 domain in the interval 59 to 431 (IQQLSVAELD…QIVFHKGYCD (373 aa)). Residues 455–496 (KAKESKRSEEYEKKIEQLESAKQEAEAKAAHLEEKVKLMEAN) are a coiled coil. Disordered stretches follow at residues 499–589 (AAPS…MMMG), 994–1021 (RLQE…DMDA), and 1039–1072 (GSAF…RTRV). Residues 512–572 (PMPPPPPGGG…MGGPPPPPMP (61 aa)) show a composition bias toward pro residues. The FH1 domain maps to 512 to 596 (PMPPPPPGGG…MMGPMVPVLP (85 aa)). The FH2 domain maps to 601 to 1001 (PKKKWDVKNP…KRRLQEAREQ (401 aa)). A compositionally biased stretch (basic and acidic residues) spans 994 to 1010 (RLQEAREQSAREQQERQ). Residues 1022 to 1054 (PQTQEGVMDSLLEALQTGSAFGQRNRQARRQRP) form the DAD domain.

This sequence belongs to the formin homology family. Diaphanous subfamily. May interact (via CBD/FH3 domain) with Rho1.

The protein resides in the cytoplasm. The protein localises to the cytoskeleton. It is found in the cleavage furrow. It localises to the apical cell membrane. Its function is as follows. Required for cytokinesis in both mitosis and meiosis. Has a role in actin cytoskeleton organization and is essential for many, if not all, actin-mediated events involving membrane invagination. May serve as a mediator between signaling molecules and actin organizers at specific phases of the cell cycle. Possible component of the contractile ring or may control its function. The polypeptide is Protein diaphanous (dia) (Drosophila melanogaster (Fruit fly)).